The sequence spans 146 residues: PSVYDAAAQLTADVKKDLRDSWKVIGSDKKGNGVALMTTLFADNQETIGYFKRLGDVSQGMANDKLRGHSITLMYALQNFIDQLDNPDDLVCVVEKFAVNHITRKISAAEFGKINGPIKKVLASKNFGDKYANAWAKLVAVVQAAL.

A Globin domain is found at 9–146 (QLTADVKKDL…KLVAVVQAAL (138 aa)). H101 contributes to the heme b binding site.

The protein belongs to the globin family. In terms of assembly, homodimer.

It localises to the cytoplasm. This Anadara inaequivalvis (Inequivalve ark) protein is Globin-1.